Consider the following 1853-residue polypeptide: DNA-directed RNA polymerase II subunit RPB1 (1853 aa).

Residues Cys66, Cys69, Cys76, His79, Cys106, Cys109, Cys149, and Cys177 each coordinate Zn(2+). Residues 256-268 are lid loop; that stretch reads PAVVTFGSAKNQD. The tract at residues 314–331 is rudder loop; it reads NCIPGLPTATQKGGRPLK. Asp489, Asp491, and Asp493 together coordinate Mg(2+). The tract at residues 827-839 is bridging helix; the sequence is PSEFFFHAMGGRE. Lys1260 participates in a covalent cross-link: Glycyl lysine isopeptide (Lys-Gly) (interchain with G-Cter in ubiquitin). 2 disordered regions span residues 1520 to 1568 and 1589 to 1853; these read PWSP…PRTP and SPHY…DPQN. Composition is skewed to low complexity over residues 1589 to 1811 and 1821 to 1853; these read SPHY…TPSP and YSPS…DPQN. 26 repeat units span residues 1592 to 1598, 1599 to 1605, 1616 to 1622, 1623 to 1629, 1630 to 1636, 1637 to 1643, 1644 to 1650, 1651 to 1657, 1658 to 1664, 1665 to 1671, 1679 to 1685, 1686 to 1692, 1693 to 1699, 1700 to 1706, 1707 to 1713, 1717 to 1723, 1724 to 1730, 1731 to 1737, 1752 to 1758, 1759 to 1765, 1779 to 1785, 1786 to 1792, 1800 to 1806, 1821 to 1827, 1828 to 1834, and 1842 to 1848. Residues 1592–1848 are C-terminal domain (CTD); 26 X 7 AA approximate tandem repeats of Y-[ST]-P-[ST]-S-P-[AGKNQRST]; sequence YSPTSPSYSP…SPSYSPSSPT (257 aa).

It belongs to the RNA polymerase beta' chain family. As to quaternary structure, component of the RNA polymerase II (Pol II) complex consisting of 12 subunits. Interacts with sig-7. The tandem 7 residues repeats in the C-terminal domain (CTD) can be highly phosphorylated. The phosphorylation activates Pol II. Phosphorylation occurs mainly at residues 'Ser-2' and 'Ser-5' of the heptapeptide repeat and starts at the 3- to 4-cell embryonic stage. This phosphorylation also occurs in the early stages of oocyte development and is not detected in oocytes arrested at the meiotic diakinesis stage. In the somatic lineage, phosphorylation at 'Ser-2' is mediated by cdk-12 downstream of cdk-9 whereas in the germline lineage cdk-12 phosphorylates 'Ser-2' independently of cdk-9. Phosphorylation is likely mediated by cdk-7. May be dephosphorylated by fcp-1 in diakinetic oocytes and in 1-cell and 2-cell embryos. Dephosphorylated at 'Ser-5' of the heptapeptide repeat by ssup-72. The phosphorylation state is believed to result from the balanced action of site-specific CTD kinases and phosphatase, and a 'CTD code' that specifies the position of Pol II within the transcription cycle has been proposed. Post-translationally, following transcription stress, the elongating form of RNA polymerase II (RNA pol IIo) is polyubiquitinated via 'Lys-63'-linkages on Lys-1260 at DNA damage sites without leading to degradation: ubiquitination promotes RNA pol IIo backtracking to allow access by the transcription-coupled nucleotide excision repair (TC-NER) machinery. Subsequent DEF1-dependent polyubiquitination by the elongin complex via 'Lys-48'-linkages may lead to proteasome-mediated degradation; presumably at stalled RNA pol II where TC-NER has failed, to halt global transcription and enable 'last resort' DNA repair pathways.

Its subcellular location is the nucleus. The protein resides in the chromosome. It catalyses the reaction RNA(n) + a ribonucleoside 5'-triphosphate = RNA(n+1) + diphosphate. Its function is as follows. DNA-dependent RNA polymerase catalyzes the transcription of DNA into RNA using the four ribonucleoside triphosphates as substrates. Largest and catalytic component of RNA polymerase II which synthesizes mRNA precursors and many functional non-coding RNAs. Forms the polymerase active center together with the second largest subunit. Pol II is the central component of the basal RNA polymerase II transcription machinery. It is composed of mobile elements that move relative to each other. RPB1 is part of the core element with the central large cleft, the clamp element that moves to open and close the cleft and the jaws that are thought to grab the incoming DNA template. At the start of transcription, a single-stranded DNA template strand of the promoter is positioned within the central active site cleft of Pol II. A bridging helix emanates from RPB1 and crosses the cleft near the catalytic site and is thought to promote translocation of Pol II by acting as a ratchet that moves the RNA-DNA hybrid through the active site by switching from straight to bent conformations at each step of nucleotide addition. During transcription elongation, Pol II moves on the template as the transcript elongates. Elongation is influenced by the phosphorylation status of the C-terminal domain (CTD) of Pol II largest subunit (RPB1), which serves as a platform for assembly of factors that regulate transcription initiation, elongation, termination and mRNA processing. Involved in the transcription of several genes including those involved in embryogenesis. The sequence is that of DNA-directed RNA polymerase II subunit RPB1 from Caenorhabditis briggsae.